We begin with the raw amino-acid sequence, 403 residues long: Nucleolar protein 13 (403 aa).

Basic and acidic residues-rich tracts occupy residues methionine 1 to glutamate 35 and lysine 75 to glutamine 97. Disordered regions lie at residues methionine 1–lysine 43 and isoleucine 72–lysine 116. Serine 2 is subject to N-acetylserine. A Phosphoserine modification is found at serine 2. A compositionally biased stretch (polar residues) spans glutamate 99–glycine 108. Residue threonine 105 is modified to Phosphothreonine. RRM domains follow at residues tyrosine 125–asparagine 219 and arginine 239–aspartate 317. The span at glutamate 313 to asparagine 329 shows a compositional bias: basic and acidic residues. A disordered region spans residues glutamate 313 to aspartate 403. Over residues valine 330 to lysine 344 the composition is skewed to polar residues. At serine 335 the chain carries Phosphoserine. The span at glycine 345–arginine 361 shows a compositional bias: basic and acidic residues. The segment covering aspartate 371–alanine 381 has biased composition (polar residues).

The protein localises to the nucleus. It localises to the nucleolus. This is Nucleolar protein 13 (NOP13) from Saccharomyces cerevisiae (strain ATCC 204508 / S288c) (Baker's yeast).